The primary structure comprises 110 residues: Iron-sulfur cluster assembly protein CyaY (110 aa).

This sequence belongs to the frataxin family.

In terms of biological role, involved in iron-sulfur (Fe-S) cluster assembly. May act as a regulator of Fe-S biogenesis. The polypeptide is Iron-sulfur cluster assembly protein CyaY (Pseudomonas fluorescens (strain Pf0-1)).